A 272-amino-acid chain; its full sequence is 2-amino-3,7-dideoxy-D-threo-hept-6-ulosonate synthase (272 aa).

Catalysis depends on Asp33, which acts as the Proton acceptor. Residues 33–37 and 153–155 contribute to the 1-deoxy-D-threo-hexo-2,5-diulose 6-phosphate site; these read DHGVS and YPR. Tyr153 acts as the Proton donor in catalysis. Lys184 serves as the catalytic Schiff-base intermediate with substrate. Residues 209–210 and 237–238 contribute to the 1-deoxy-D-threo-hexo-2,5-diulose 6-phosphate site; these read GG and GR.

The protein belongs to the DeoC/FbaB aldolase family. ADHS subfamily. In terms of assembly, homodecamer.

The catalysed reaction is 1-deoxy-D-threo-hexo-2,5-diulose 6-phosphate + L-aspartate 4-semialdehyde = 2,3-dioxopropyl phosphate + 2-amino-2,3,7-trideoxy-D-lyxo-hept-6-ulosonate. Catalyzes a transaldol reaction between 6-deoxy-5-ketofructose 1-phosphate (DKFP) and L-aspartate semialdehyde (ASA) with an elimination of hydroxypyruvaldehyde phosphate to yield 2-amino-3,7-dideoxy-D-threo-hept-6-ulosonate (ADH). Plays a key role in an alternative pathway of the biosynthesis of 3-dehydroquinate (DHQ), which is involved in the canonical pathway for the biosynthesis of aromatic amino acids. The chain is 2-amino-3,7-dideoxy-D-threo-hept-6-ulosonate synthase from Methanococcus maripaludis (strain C7 / ATCC BAA-1331).